The following is a 138-amino-acid chain: Large ribosomal subunit protein uL16 (138 aa).

Positions 1–16 (MLIPKRVKYRRQHRPT) are enriched in basic residues. The disordered stretch occupies residues 1–23 (MLIPKRVKYRRQHRPTRSGVSKG).

This sequence belongs to the universal ribosomal protein uL16 family. In terms of assembly, part of the 50S ribosomal subunit.

In terms of biological role, binds 23S rRNA and is also seen to make contacts with the A and possibly P site tRNAs. The polypeptide is Large ribosomal subunit protein uL16 (Corynebacterium aurimucosum (strain ATCC 700975 / DSM 44827 / CIP 107346 / CN-1) (Corynebacterium nigricans)).